The chain runs to 306 residues: MIFQRTVQKMVKATGVGLHSGNKVTLSIMPAPVNTGIVLVRTDLSPAVAIPAKAEQVRETTMCTALVNDEGIRISTIEHLFAALAGLGIDNAVIEVDAPEIPIMDGSASPFVFLLQSAGIKEQAAPKKYLKIKRPVRVEDGDKWAELKPFKGFRVNFKIDFAHPEIARSQQHVVMDFSTSAFVKEISRARTFGFMRDIEYLRANNLALGGSMENAVVLDEYRVLNPDGLRYEDEFVKHKILDAFGDLYVAGHAILGEFTAYKTGHALNNQLVRALLAQQDAWELVSFEKEADVPVSFSVPSGAVFA.

Positions 79, 238, and 242 each coordinate Zn(2+). The Proton donor role is filled by histidine 265.

This sequence belongs to the LpxC family. Requires Zn(2+) as cofactor.

The enzyme catalyses a UDP-3-O-[(3R)-3-hydroxyacyl]-N-acetyl-alpha-D-glucosamine + H2O = a UDP-3-O-[(3R)-3-hydroxyacyl]-alpha-D-glucosamine + acetate. The protein operates within glycolipid biosynthesis; lipid IV(A) biosynthesis; lipid IV(A) from (3R)-3-hydroxytetradecanoyl-[acyl-carrier-protein] and UDP-N-acetyl-alpha-D-glucosamine: step 2/6. In terms of biological role, catalyzes the hydrolysis of UDP-3-O-myristoyl-N-acetylglucosamine to form UDP-3-O-myristoylglucosamine and acetate, the committed step in lipid A biosynthesis. The polypeptide is UDP-3-O-acyl-N-acetylglucosamine deacetylase (Shewanella sp. (strain W3-18-1)).